A 328-amino-acid polypeptide reads, in one-letter code: Pancreas transcription factor 1 subunit alpha (328 aa).

Residues 163-215 form the bHLH domain; the sequence is QLRQAANVRERRRMQSINDAFEGLRSHIPTLPYEKRLSKVDTLRLAIGYINFL. Disordered regions lie at residues 259–278 and 305–328; these read RGTR…PLAG and DPRK…EFVS.

As to quaternary structure, component of the pancreas transcription factor 1 complex (PTF1) which is composed of TCF3/p75, TCF12/p64 and PTF1A/p48. TCF3 is responsible for the nuclear import of the p48/p64 complex. Interacts with TCF3 and RBPSUH/RBP-Jkappa. As to expression, pancreas-specific (at protein level). Loss of expression is seen in ductal type pancreas cancers.

The protein localises to the nucleus. Its subcellular location is the cytoplasm. Transcription factor implicated in the cell fate determination in various organs. Binds to the E-box consensus sequence 5'-CANNTG-3'. Plays a role in early and late pancreas development and differentiation. Important for determining whether cells allocated to the pancreatic buds continue towards pancreatic organogenesis or revert back to duodenal fates. May be involved in the maintenance of exocrine pancreas-specific gene expression including ELA1 and amylase. Required for the formation of pancreatic acinar and ductal cells. Plays an important role in cerebellar development. Directly regulated by FOXN4 and RORC during retinal development, FOXN4-PTF1A pathway plays a central role in directing the differentiation of retinal progenitors towards horizontal and amacrine fates. The polypeptide is Pancreas transcription factor 1 subunit alpha (PTF1A) (Homo sapiens (Human)).